Here is a 305-residue protein sequence, read N- to C-terminus: MKQLPKTRTALLLAFLVIMWGVNWPLSKAALAYSPPLLFAGIRTLIGGLLLVIVALPRIHKLRLKETWPIYLVSALLNITLFYGLQTIGLNYLPAGLFSAIVFFQPVLMGVFSWLWLGESMFVMKVIGLILGFAGVAVISAAGFGGHISVIGVLLALGSAVSWALGTVYMKKTGSRVDSIWMVALQLTIGSVFLLISGFWTESFSAIQWTAPFITSLLFISVFVIALGWLVFFTLVGSGEASKVASYTFLIPLISIVASSIFLHEPLTLSLLAGLLLIVTSICLVNTKSKAQKAAAIGINEKAAQ.

The next 10 membrane-spanning stretches (helical) occupy residues 11 to 31 (LLLAFLVIMWGVNWPLSKAAL), 37 to 57 (LLFAGIRTLIGGLLLVIVALP), 70 to 90 (IYLVSALLNITLFYGLQTIGL), 97 to 117 (LFSAIVFFQPVLMGVFSWLWL), 126 to 146 (VIGLILGFAGVAVISAAGFGG), 148 to 168 (ISVIGVLLALGSAVSWALGTV), 180 to 200 (IWMVALQLTIGSVFLLISGFW), 217 to 237 (LLFISVFVIALGWLVFFTLVG), 244 to 264 (VASYTFLIPLISIVASSIFLH), and 265 to 285 (EPLTLSLLAGLLLIVTSICLV). EamA domains follow at residues 18 to 141 (IMWG…VISA) and 161 to 287 (VSWA…LVNT).

The protein belongs to the EamA transporter family.

The protein resides in the cell membrane. This is an uncharacterized protein from Bacillus subtilis (strain 168).